The sequence spans 379 residues: Gonadotropin-releasing hormone II receptor (379 aa).

Topologically, residues 1 to 45 are extracellular; the sequence is MSGNTTLLLSNPTNVLDNSSVLNVSVSPPVLKWETPTFTTAARFR. Asn-4, Asn-18, and Asn-23 each carry an N-linked (GlcNAc...) asparagine glycan. A helical membrane pass occupies residues 46–65; the sequence is VAATLVLFVFAAASNLSVLL. Residues 66-80 lie on the Cytoplasmic side of the membrane; that stretch reads SVTRGRGRRLASHLR. A helical transmembrane segment spans residues 81–100; the sequence is PLIASLASADLVMTFVVMPL. The Extracellular segment spans residues 101–118; it reads DAVWNVTVQWYAGDAMCK. The N-linked (GlcNAc...) asparagine glycan is linked to Asn-105. The cysteines at positions 117 and 194 are disulfide-linked. A helical membrane pass occupies residues 119 to 140; it reads LMCFLKLFAMHSAAFILVVVSL. The Cytoplasmic segment spans residues 141–167; the sequence is DRHHAILHPLDTLDAGRRNRRMLLTAW. Residues 168-184 form a helical membrane-spanning segment; that stretch reads ILSLLLASPQLFIFRAI. The Extracellular segment spans residues 185 to 210; the sequence is KAKGVDFVQCATHGSFQQHWQETAYN. A helical membrane pass occupies residues 211–230; sequence MFHFVTLYVFPLLVMSLCYT. Topologically, residues 231-283 are cytoplasmic; sequence RILVEINRQMHRSKDKAGEPCLRRSGTDMIPKARMKTLKMTIIIVASFVICWT. The helical transmembrane segment at 284-302 threads the bilayer; that stretch reads PYYLLGIWYWFQPQMLHVI. Topologically, residues 303-308 are extracellular; it reads PDYVHH. A helical membrane pass occupies residues 309–328; that stretch reads VFFVFGNLNTCCDPVIYGFF. Over 329 to 379 the chain is Cytoplasmic; it reads TPSFRADLSRCFCWRNQNASAKSLPHFSGHRREVSGEAESDLGSGDQPSGQ. The disordered stretch occupies residues 355-379; the sequence is FSGHRREVSGEAESDLGSGDQPSGQ.

It belongs to the G-protein coupled receptor 1 family. Post-translationally, phosphorylated on the C-terminal cytoplasmic tail.

Its subcellular location is the cell membrane. In terms of biological role, receptor for gonadotropin releasing hormone II (GnRH II). This receptor mediates its action by association with G proteins that activate a phosphatidylinositol-calcium second messenger system. This Clarias gariepinus (North African catfish) protein is Gonadotropin-releasing hormone II receptor.